The chain runs to 450 residues: Ribulose bisphosphate carboxylase large chain (450 aa).

An N6,N6,N6-trimethyllysine modification is found at Lys-4. Residues Asn-113 and Thr-163 each coordinate substrate. Residue Lys-165 is the Proton acceptor of the active site. Residue Lys-167 participates in substrate binding. Positions 191, 193, and 194 each coordinate Mg(2+). Lys-191 is subject to N6-carboxylysine. Residue His-284 is the Proton acceptor of the active site. Residues Arg-285, His-317, and Ser-369 each contribute to the substrate site.

This sequence belongs to the RuBisCO large chain family. Type I subfamily. In terms of assembly, heterohexadecamer of 8 large chains and 8 small chains; disulfide-linked. The disulfide link is formed within the large subunit homodimers. Mg(2+) is required as a cofactor. In terms of processing, the disulfide bond which can form in the large chain dimeric partners within the hexadecamer appears to be associated with oxidative stress and protein turnover.

Its subcellular location is the plastid. It is found in the chloroplast. It catalyses the reaction 2 (2R)-3-phosphoglycerate + 2 H(+) = D-ribulose 1,5-bisphosphate + CO2 + H2O. The catalysed reaction is D-ribulose 1,5-bisphosphate + O2 = 2-phosphoglycolate + (2R)-3-phosphoglycerate + 2 H(+). RuBisCO catalyzes two reactions: the carboxylation of D-ribulose 1,5-bisphosphate, the primary event in carbon dioxide fixation, as well as the oxidative fragmentation of the pentose substrate in the photorespiration process. Both reactions occur simultaneously and in competition at the same active site. This chain is Ribulose bisphosphate carboxylase large chain, found in Sedum rubrotinctum (Jelly bean plant).